Here is a 462-residue protein sequence, read N- to C-terminus: Cysteine--tRNA ligase (462 aa).

Cys30 contributes to the Zn(2+) binding site. Positions 32-42 (MTVYDYCHIGH) match the 'HIGH' region motif. Zn(2+) is bound by residues Cys214, His239, and Glu243. Residues 271–275 (KMSKS) carry the 'KMSKS' region motif. Lys274 lines the ATP pocket.

This sequence belongs to the class-I aminoacyl-tRNA synthetase family. In terms of assembly, monomer. Zn(2+) is required as a cofactor.

It localises to the cytoplasm. It catalyses the reaction tRNA(Cys) + L-cysteine + ATP = L-cysteinyl-tRNA(Cys) + AMP + diphosphate. The polypeptide is Cysteine--tRNA ligase (Herminiimonas arsenicoxydans).